The sequence spans 309 residues: NADH-cytochrome b5 reductase 1 (309 aa).

A helical membrane pass occupies residues 30–50; sequence FVPYAVALTAILAGLKLFTGG. The 106-residue stretch at 60 to 165 folds into the FAD-binding FR-type domain; the sequence is TEFQEFVLKE…RGPKGAMVYT (106 aa). Residues 145–160 and 171–208 each bind FAD; these read TTLK…GPKG and HIGM…KLDL.

It belongs to the flavoprotein pyridine nucleotide cytochrome reductase family. Monomer. Component of the 2-(3-amino-3-carboxypropyl)histidine synthase complex composed of dph1, dph2, dph3 and a NADH-dependent reductase, predominantly cbr1. FAD is required as a cofactor.

The protein resides in the mitochondrion outer membrane. It catalyses the reaction 2 Fe(III)-[cytochrome b5] + NADH = 2 Fe(II)-[cytochrome b5] + NAD(+) + H(+). The enzyme catalyses 2 Fe(3+)-[Dph3] + NADH = 2 Fe(2+)-[Dph3] + NAD(+) + H(+). It participates in protein modification; peptidyl-diphthamide biosynthesis. Functionally, NADH-dependent reductase for dph3 and cytochrome b5. Required for the first step of diphthamide biosynthesis, a post-translational modification of histidine which occurs in elongation factor 2. Dph1 and dph2 transfer a 3-amino-3-carboxypropyl (ACP) group from S-adenosyl-L-methionine (SAM) to a histidine residue, the reaction is assisted by a reduction system comprising dph3 and a NADH-dependent reductase, predominantly cbr1. By reducing dph3, also involved in the formation of the tRNA wobble base modification mcm5s 2U (5-methoxycarbonylmethyl-2-thiouridine), mediated by the elongator complex. The cytochrome b5/NADH cytochrome b5 reductase electron transfer system supports the catalytic activity of several sterol biosynthetic enzymes. This chain is NADH-cytochrome b5 reductase 1 (cbr1), found in Neosartorya fischeri (strain ATCC 1020 / DSM 3700 / CBS 544.65 / FGSC A1164 / JCM 1740 / NRRL 181 / WB 181) (Aspergillus fischerianus).